Reading from the N-terminus, the 194-residue chain is FK506-binding protein 3 (194 aa).

Residues 1–19 (MNKFLIALLVLATLAVSFS) form the signal peptide. The PPIase FKBP-type domain maps to 44–133 (GDYISLKYVG…YFDLEVVSIE (90 aa)). The chain crosses the membrane as a helical span at residues 148–168 (VGTIIAFSMLAGFIVLVKFII). Positions 173 to 194 (DESNSKKPAPGKPKKTKAAKQN) are disordered. The span at 184 to 194 (KPKKTKAAKQN) shows a compositional bias: basic residues.

It belongs to the FKBP-type PPIase family.

It is found in the membrane. It catalyses the reaction [protein]-peptidylproline (omega=180) = [protein]-peptidylproline (omega=0). With respect to regulation, inhibited by both FK506 and rapamycin. Functionally, PPIases accelerate the folding of proteins by catalyzing the cis-trans isomerization of proline imidic peptide bonds in oligopeptides. In Dictyostelium discoideum (Social amoeba), this protein is FK506-binding protein 3 (fkbp3).